Reading from the N-terminus, the 314-residue chain is Ribosomal protein L11 methyltransferase (314 aa).

The S-adenosyl-L-methionine site is built by Thr161, Gly182, Asp204, and Asn248.

The protein belongs to the methyltransferase superfamily. PrmA family.

The protein resides in the cytoplasm. The enzyme catalyses L-lysyl-[protein] + 3 S-adenosyl-L-methionine = N(6),N(6),N(6)-trimethyl-L-lysyl-[protein] + 3 S-adenosyl-L-homocysteine + 3 H(+). In terms of biological role, methylates ribosomal protein L11. This Listeria monocytogenes serotype 1/2a (strain 10403S) protein is Ribosomal protein L11 methyltransferase.